The sequence spans 269 residues: GTP cyclohydrolase FolE2 (269 aa).

The protein belongs to the GTP cyclohydrolase IV family.

The catalysed reaction is GTP + H2O = 7,8-dihydroneopterin 3'-triphosphate + formate + H(+). The protein operates within cofactor biosynthesis; 7,8-dihydroneopterin triphosphate biosynthesis; 7,8-dihydroneopterin triphosphate from GTP: step 1/1. Functionally, converts GTP to 7,8-dihydroneopterin triphosphate. The sequence is that of GTP cyclohydrolase FolE2 from Burkholderia ambifaria (strain MC40-6).